A 69-amino-acid chain; its full sequence is MPLTVKCPICKTPVEWAPQSEFKPFCSERCKLIDLGDWASEKHAIPVKSEFDLDALDEFDLDEDAFFKE.

Residues C7, C10, C26, and C30 each contribute to the Zn(2+) site.

It belongs to the DNA gyrase inhibitor YacG family. Interacts with GyrB. Zn(2+) serves as cofactor.

Functionally, inhibits all the catalytic activities of DNA gyrase by preventing its interaction with DNA. Acts by binding directly to the C-terminal domain of GyrB, which probably disrupts DNA binding by the gyrase. This Shewanella putrefaciens (strain CN-32 / ATCC BAA-453) protein is DNA gyrase inhibitor YacG.